A 342-amino-acid chain; its full sequence is Protein BMEI1586 (342 aa).

Residue S90 is the Proton acceptor of the active site. Residues 91-92 (GS), D251, and 256-257 (GT) contribute to the substrate site.

Belongs to the proline racemase family. As to quaternary structure, homotetramer.

It carries out the reaction trans-4-hydroxy-L-proline = cis-4-hydroxy-D-proline. In terms of biological role, in vitro, catalyzes the epimerization of trans-4-hydroxy-L-proline (t4LHyp) to cis-4-hydroxy-D-proline (c4DHyp) and that of trans-3-hydroxy-L-proline (t3LHyp) to cis-3-hydroxy-D-proline (c3DHyp), albeit with very low efficiency. The physiological substrate may be different. Displays neither proline racemase activity nor t3LHyp dehydratase activity. This is Protein BMEI1586 from Brucella melitensis biotype 1 (strain ATCC 23456 / CCUG 17765 / NCTC 10094 / 16M).